The chain runs to 207 residues: Ribosomal RNA large subunit methyltransferase E (207 aa).

S-adenosyl-L-methionine contacts are provided by glycine 60, tryptophan 62, aspartate 80, aspartate 96, and aspartate 121. Residue lysine 161 is the Proton acceptor of the active site.

Belongs to the class I-like SAM-binding methyltransferase superfamily. RNA methyltransferase RlmE family.

Its subcellular location is the cytoplasm. The catalysed reaction is uridine(2552) in 23S rRNA + S-adenosyl-L-methionine = 2'-O-methyluridine(2552) in 23S rRNA + S-adenosyl-L-homocysteine + H(+). Functionally, specifically methylates the uridine in position 2552 of 23S rRNA at the 2'-O position of the ribose in the fully assembled 50S ribosomal subunit. This is Ribosomal RNA large subunit methyltransferase E from Methylobacillus flagellatus (strain ATCC 51484 / DSM 6875 / VKM B-1610 / KT).